The primary structure comprises 204 residues: Protein Mis18-alpha (204 aa).

A phosphoserine mark is found at Ser-13, Ser-16, and Ser-17. The Mis18 domain occupies 51-149; sequence PLVFLCARCR…SVEAVESYTL (99 aa). Zn(2+) is bound by residues Cys-56, Cys-59, Cys-112, and Cys-115. Lys-133 participates in a covalent cross-link: Glycyl lysine isopeptide (Lys-Gly) (interchain with G-Cter in SUMO2). Ser-204 is subject to Phosphoserine.

This sequence belongs to the mis18 family. As to quaternary structure, homodimer, and heterodimer with OIP5/MIS18B. Identified in a complex containing MIS18A, OIP5/MIS18B, MIS18BP1, RBBP7 and RBBP4.

It is found in the nucleus. The protein resides in the chromosome. Its subcellular location is the centromere. Required for recruitment of CENPA to centromeres and normal chromosome segregation during mitosis. In Mus musculus (Mouse), this protein is Protein Mis18-alpha (Mis18a).